A 1579-amino-acid chain; its full sequence is MAP kinase kinase kinase SSK2 (1579 aa).

The segment at 1–70 (MSHSDYFNYK…HSTQYFRSPN (70 aa)) is disordered. Low complexity predominate over residues 21–44 (SSKMRQSSSSSSSRLRSESLGRNS). A compositionally biased stretch (polar residues) spans 45-67 (NTTQARVASSPISPGLHSTQYFR). 4 positions are modified to phosphoserine: Ser57, Ser62, Ser78, and Ser118. Disordered regions lie at residues 97–155 (FFHQ…ESEI) and 190–243 (SIMS…GSTT). Positions 104 to 118 (SGSSSSSARSSRRPS) are enriched in low complexity. The span at 127–139 (NPQQSLPKLSTQP) shows a compositional bias: polar residues. Over residues 144–155 (KKVEASKTESEI) the composition is skewed to basic and acidic residues. The residue at position 290 (Ser290) is a Phosphoserine. The Protein kinase domain maps to 1266–1558 (WQKRNFIGGG…AVELLMDPWI (293 aa)). ATP is bound by residues 1272 to 1280 (IGGGTFGRV) and Lys1295. Asp1390 (proton acceptor) is an active-site residue. Ser1424 is subject to Phosphoserine.

It belongs to the protein kinase superfamily. STE Ser/Thr protein kinase family. MAP kinase kinase kinase subfamily. As to quaternary structure, interacts with by SSK1.

It catalyses the reaction L-seryl-[protein] + ATP = O-phospho-L-seryl-[protein] + ADP + H(+). The enzyme catalyses L-threonyl-[protein] + ATP = O-phospho-L-threonyl-[protein] + ADP + H(+). In terms of biological role, kinase involved in a signal transduction pathway that is activated by changes in the osmolarity of the extracellular environment. Activates the PBS2 MAP kinase kinase by phosphorylation. This chain is MAP kinase kinase kinase SSK2 (SSK2), found in Saccharomyces cerevisiae (strain ATCC 204508 / S288c) (Baker's yeast).